Here is a 266-residue protein sequence, read N- to C-terminus: Thymidylate synthase (266 aa).

Arginine 24 is a binding site for dUMP. Position 54 (histidine 54) interacts with (6R)-5,10-methylene-5,6,7,8-tetrahydrofolate. 129–130 (RR) is a dUMP binding site. The active-site Nucleophile is cysteine 149. Residues 169–172 (RSAD), asparagine 180, and 210–212 (HIY) each bind dUMP. Position 172 (aspartate 172) interacts with (6R)-5,10-methylene-5,6,7,8-tetrahydrofolate. (6R)-5,10-methylene-5,6,7,8-tetrahydrofolate is bound at residue alanine 265.

It belongs to the thymidylate synthase family. Bacterial-type ThyA subfamily. In terms of assembly, homodimer.

It is found in the cytoplasm. It carries out the reaction dUMP + (6R)-5,10-methylene-5,6,7,8-tetrahydrofolate = 7,8-dihydrofolate + dTMP. It participates in pyrimidine metabolism; dTTP biosynthesis. Functionally, catalyzes the reductive methylation of 2'-deoxyuridine-5'-monophosphate (dUMP) to 2'-deoxythymidine-5'-monophosphate (dTMP) while utilizing 5,10-methylenetetrahydrofolate (mTHF) as the methyl donor and reductant in the reaction, yielding dihydrofolate (DHF) as a by-product. This enzymatic reaction provides an intracellular de novo source of dTMP, an essential precursor for DNA biosynthesis. This Mycobacterium sp. (strain KMS) protein is Thymidylate synthase.